The chain runs to 53 residues: UPF0391 membrane protein BPSS2216 (53 aa).

A run of 2 helical transmembrane segments spans residues 5–25 (ALVFFIIAIIAAVLGFGGIAA) and 30–50 (IAKILFYIFVVIFLVTLVLGV).

It belongs to the UPF0391 family.

Its subcellular location is the cell membrane. The sequence is that of UPF0391 membrane protein BPSS2216 from Burkholderia pseudomallei (strain K96243).